The chain runs to 239 residues: Riboflavin synthase (239 aa).

2 Lumazine-binding repeats span residues 1–105 (MFTG…MGGH) and 106–205 (VVQG…EKQI). Residues 4 to 6 (GLV), 54 to 56 (CLT), 70 to 75 (GISPET), 109 to 111 (GHV), K145, 154 to 156 (SLT), and 170 to 175 (SMVSYT) each bind 2,4-dihydroxypteridine.

In terms of assembly, homotrimer.

The enzyme catalyses 2 6,7-dimethyl-8-(1-D-ribityl)lumazine + H(+) = 5-amino-6-(D-ribitylamino)uracil + riboflavin. It functions in the pathway cofactor biosynthesis; riboflavin biosynthesis; riboflavin from 2-hydroxy-3-oxobutyl phosphate and 5-amino-6-(D-ribitylamino)uracil: step 2/2. Catalyzes the dismutation of two molecules of 6,7-dimethyl-8-ribityllumazine, resulting in the formation of riboflavin and 5-amino-6-(D-ribitylamino)uracil. The protein is Riboflavin synthase (RIB5) of Meyerozyma guilliermondii (strain ATCC 6260 / CBS 566 / DSM 6381 / JCM 1539 / NBRC 10279 / NRRL Y-324) (Yeast).